We begin with the raw amino-acid sequence, 364 residues long: Ferrochelatase (364 aa).

2 residues coordinate Fe cation: H213 and E294.

This sequence belongs to the ferrochelatase family.

The protein localises to the cytoplasm. It catalyses the reaction heme b + 2 H(+) = protoporphyrin IX + Fe(2+). It functions in the pathway porphyrin-containing compound metabolism; protoheme biosynthesis; protoheme from protoporphyrin-IX: step 1/1. Functionally, catalyzes the ferrous insertion into protoporphyrin IX. This is Ferrochelatase from Chromobacterium violaceum (strain ATCC 12472 / DSM 30191 / JCM 1249 / CCUG 213 / NBRC 12614 / NCIMB 9131 / NCTC 9757 / MK).